The sequence spans 451 residues: Tubulin alpha-1A chain (451 aa).

Positions 1–4 (MREC) match the MREC motif motif. GTP is bound by residues glutamine 11, glutamate 71, serine 140, glycine 144, threonine 145, threonine 179, asparagine 206, and asparagine 228. Residue glutamate 71 participates in Mg(2+) binding. Glutamate 254 is an active-site residue. A disordered region spans residues 432–451 (YEEVGVDSVEGEGEEEGEEY). Position 445 is a 5-glutamyl polyglutamate (glutamate 445).

It belongs to the tubulin family. In terms of assembly, dimer of alpha and beta chains. A typical microtubule is a hollow water-filled tube with an outer diameter of 25 nm and an inner diameter of 15 nM. Alpha-beta heterodimers associate head-to-tail to form protofilaments running lengthwise along the microtubule wall with the beta-tubulin subunit facing the microtubule plus end conferring a structural polarity. Microtubules usually have 13 protofilaments but different protofilament numbers can be found in some organisms and specialized cells. Mg(2+) serves as cofactor. Post-translationally, some glutamate residues at the C-terminus are polyglycylated, resulting in polyglycine chains on the gamma-carboxyl group. Glycylation is mainly limited to tubulin incorporated into axonemes (cilia and flagella) whereas glutamylation is prevalent in neuronal cells, centrioles, axonemes, and the mitotic spindle. Both modifications can coexist on the same protein on adjacent residues, and lowering polyglycylation levels increases polyglutamylation, and reciprocally. The precise function of polyglycylation is still unclear. In terms of processing, some glutamate residues at the C-terminus are polyglutamylated, resulting in polyglutamate chains on the gamma-carboxyl group. Polyglutamylation plays a key role in microtubule severing by spastin (SPAST). SPAST preferentially recognizes and acts on microtubules decorated with short polyglutamate tails: severing activity by SPAST increases as the number of glutamates per tubulin rises from one to eight, but decreases beyond this glutamylation threshold. Undergoes a tyrosination/detyrosination cycle, the cyclic removal and re-addition of a C-terminal tyrosine residue by the enzymes tubulin tyrosine carboxypeptidase (MATCAP1, VASH1 or VASH2) and tubulin tyrosine ligase (TTL), respectively. Post-translationally, tyrosination promotes microtubule interaction with CAP-Gly microtubule plus-end tracking proteins. Tyrosinated tubulins regulate the initiation of dynein-driven motility. In terms of processing, detyrosination is involved in metaphase plate congression by guiding chromosomes during mitosis. Detyrosination increases microtubules-dependent mechanotransduction in dystrophic cardiac and skeletal muscle. In cardiomyocytes, detyrosinated microtubules are required to resist to contractile compression during contraction.

The protein localises to the cytoplasm. It localises to the cytoskeleton. The catalysed reaction is GTP + H2O = GDP + phosphate + H(+). Functionally, tubulin is the major constituent of microtubules, a cylinder consisting of laterally associated linear protofilaments composed of alpha- and beta-tubulin heterodimers. Microtubules grow by the addition of GTP-tubulin dimers to the microtubule end, where a stabilizing cap forms. Below the cap, tubulin dimers are in GDP-bound state, owing to GTPase activity of alpha-tubulin. The protein is Tubulin alpha-1A chain (TUBA1A) of Gallus gallus (Chicken).